Consider the following 917-residue polypeptide: Isoleucine--tRNA ligase (917 aa).

L-isoleucyl-5'-AMP is bound by residues Pro56, His67, Glu554, Gly555, Asp557, Gln558, and His585. The short motif at 57–67 is the 'HIGH' region element; that stretch reads PYANGNLHMGH. Positions 595-599 match the 'KMSKS' region motif; sequence KMSKS. Residue Lys598 coordinates ATP. 2 residues coordinate tRNA(Ile): Arg632 and Gln640. Zn(2+) is bound by residues Cys886, Cys889, Cys906, and Cys909.

Belongs to the class-I aminoacyl-tRNA synthetase family. IleS type 1 subfamily. In terms of assembly, monomer. Requires Zn(2+) as cofactor.

The protein localises to the cytoplasm. It carries out the reaction tRNA(Ile) + L-isoleucine + ATP = L-isoleucyl-tRNA(Ile) + AMP + diphosphate. Its function is as follows. Catalyzes the attachment of isoleucine to tRNA(Ile). As IleRS can inadvertently accommodate and process structurally similar amino acids such as valine, to avoid such errors it has two additional distinct tRNA(Ile)-dependent editing activities. One activity is designated as 'pretransfer' editing and involves the hydrolysis of activated Val-AMP. The other activity is designated 'posttransfer' editing and involves deacylation of mischarged Val-tRNA(Ile). The chain is Isoleucine--tRNA ligase (ileS) from Staphylococcus aureus.